The sequence spans 366 residues: DNA-directed RNA polymerase II subunit GRINL1A (366 aa).

Positions 1 to 23 (MFSLPRGFEPPAPEDLGRQSSAE) are disordered. Residues 15-39 (DLGRQSSAELRERLRRQERLLRNEK) are a coiled coil. The tract at residues 29–68 (RRQERLLRNEKFICKLPDKGKKISDTVAKLKAAISEREEV) is important for transcription repressor activity. Disordered stretches follow at residues 88 to 140 (ATTR…HRGN), 158 to 182 (IRARAPSSEVKEHLPQHSVSSQEEE), 201 to 225 (ADQSEPSEENTSTENFPELQSETPK), and 237 to 280 (ARNP…RRAR). Basic and acidic residues predominate over residues 90–100 (TRADTDVDKAQ). Over residues 101–127 (SSDLMLDTSSLDPDCSSIDIKSSKSTS) the composition is skewed to low complexity. Positions 225–296 (KKPHYMKVLE…TAARLLPLHH (72 aa)) are interaction with Pol II. Over residues 251–272 (VLPTQQSDSPSHCQRGQSPASS) the composition is skewed to polar residues. A Phosphoserine modification is found at Ser268. The interval 297-312 (LPAQLLSIEESLALQR) is important for transcription repressor activity. A coiled-coil region spans residues 299–333 (AQLLSIEESLALQREQKQNYEEMQAKLAAQKLAER). Residues 313–338 (EQKQNYEEMQAKLAAQKLAERLNIKM) are interaction with Pol II. The segment at 338–366 (MQSYNPEGESSGRYREVRDEADAQSSDEC) is disordered. Residues 347 to 358 (SSGRYREVRDEA) show a composition bias toward basic and acidic residues.

Belongs to the GRINL1 family. Component of the Pol II(G) complex, which contains the RNA polymerase II (Pol II) core complex subunits and POLR2M isoform 1. Pol II(G) appears to be an abundant form of Pol II. Post-translationally, dephosphorylated at Ser-268 by the PNUTS-PP1 complex, promoting RNA polymerase II transcription pause-release.

The protein resides in the nucleus. Functionally, appears to be a stable component of the Pol II(G) complex form of RNA polymerase II (Pol II). Pol II synthesizes mRNA precursors and many functional non-coding RNAs and is the central component of the basal RNA polymerase II transcription machinery. May play a role in the Mediator complex-dependent regulation of transcription activation. Acts as a negative regulator of transcriptional activation; this repression is relieved by the Mediator complex, which restores Pol II(G) activator-dependent transcription to a level equivalent to that of Pol II. This Mus musculus (Mouse) protein is DNA-directed RNA polymerase II subunit GRINL1A (Polr2m).